We begin with the raw amino-acid sequence, 299 residues long: ATP phosphoribosyltransferase (299 aa).

Belongs to the ATP phosphoribosyltransferase family. Long subfamily. Mg(2+) serves as cofactor.

The protein resides in the cytoplasm. The catalysed reaction is 1-(5-phospho-beta-D-ribosyl)-ATP + diphosphate = 5-phospho-alpha-D-ribose 1-diphosphate + ATP. The protein operates within amino-acid biosynthesis; L-histidine biosynthesis; L-histidine from 5-phospho-alpha-D-ribose 1-diphosphate: step 1/9. Feedback inhibited by histidine. In terms of biological role, catalyzes the condensation of ATP and 5-phosphoribose 1-diphosphate to form N'-(5'-phosphoribosyl)-ATP (PR-ATP). Has a crucial role in the pathway because the rate of histidine biosynthesis seems to be controlled primarily by regulation of HisG enzymatic activity. The polypeptide is ATP phosphoribosyltransferase (Shewanella loihica (strain ATCC BAA-1088 / PV-4)).